Here is a 110-residue protein sequence, read N- to C-terminus: Hydrogenase maturation factor HypA (110 aa).

Histidine 2 provides a ligand contact to Ni(2+). Zn(2+)-binding residues include cysteine 70, cysteine 73, cysteine 86, and cysteine 89.

Belongs to the HypA/HybF family.

Functionally, involved in the maturation of [NiFe] hydrogenases. Required for nickel insertion into the metal center of the hydrogenase. The chain is Hydrogenase maturation factor HypA from Geobacter sp. (strain M21).